An 848-amino-acid polypeptide reads, in one-letter code: MYLYIETLKQRLDAINQLRVDRALAAMGPAFQQVYSLLPTLLHYHHPRMPGYLDGNVPKGICLYTPDETQRHYLNELELYRGMSVQDPPKGELPITGVYTMGSTSSVGQSCSSDLDIWVCHQSWLDSEERQLLQRKCSLLESWAASLGVEVSFFLIDENRFRHNESGSLGGEDCGSTQHILLLDEFYRTAVRLAGKRILWNMVPCDEEEHYDDYVMTLYAQGVLTPNEWLDLGGLSSLSAEEYFGASLWQLYKSIDSPYKAVLKTLLLEAYSWEYPNPRLLAKDIKQRLHDGEIVSFGLDPYCMMLERVTEYLTAIEDFTRLDLVRRCFYLKVCEKLSRERACVGWRRAVLSQLVSEWGWDEARLAMLDNRANWKIDQVREAHNELLDAMMQSYRNLIRFARRNNLSVSASPQDIGVLTRKLYAAFEALPGKVTLVNPQISPDLSEPNLTFIYVPPGRANRSGWYLYNRAPNIESIISHQPLEYNRYLNKLVAWAWFNGLLTSRTRLYIKGNGIVDLPKLQEMVADVSHHFPLRLPAPTPKALYSPCEIRHLAIIVNLEYDPTAAFRNQVVHFDFRKLDVFSFGENQNCLVGSVDLLYRNSWNEVRTLHFNGEQSMIEALKTILGKMHQDAAPPDSVEVFCYSQHLRGLIRTRVQQLVSECIELRLSSTRQETGRFKALRVSGQTWGLFFERLNVSVQKLENAIEFYGAISHNKLHGLSVQVETNHVKLPAVVDGFASEGIIQFFFEETQDENGFNIYILDESNRVEVYHHCEGSKEELVRDVSRFYSSSHDRFTYGSSFINFNLPQFYQIVKVDGREQVIPFRTKSIGNLPPANQDHDTPLLQQYFS.

The tract at residues 1 to 535 is catalytic; the sequence is MYLYIETLKQ…DVSHHFPLRL (535 aa). The tract at residues 541-848 is regulatory; it reads KALYSPCEIR…DTPLLQQYFS (308 aa). At His609 the chain carries Phosphohistidine; by CRR.

It belongs to the adenylyl cyclase class-1 family.

The protein resides in the cytoplasm. It catalyses the reaction ATP = 3',5'-cyclic AMP + diphosphate. This chain is Adenylate cyclase (cyaA), found in Shigella flexneri.